The chain runs to 282 residues: Acyl-CoA-binding domain-containing protein 6 (282 aa).

Residues 1–34 (MATPFLPAGATTGDSGGELSSGDDSGDLESFQTP) are disordered. Ser-41 is modified (phosphoserine). Positions 42–127 (LAELFEKAAA…VKKLDPGWNP (86 aa)) constitute an ACB domain. An acyl-CoA contacts are provided by residues 69–73 (YARYK) and Lys-95. Position 106 is a phosphoserine (Ser-106). Tyr-114 serves as a coordination point for an acyl-CoA. 2 ANK repeats span residues 191 to 220 (EGRA…GINC) and 224 to 253 (EGQT…DPTL).

As to quaternary structure, monomer.

Its subcellular location is the cytoplasm. The protein localises to the nucleus. Functionally, binds long-chain acyl-coenzyme A molecules with a strong preference for unsaturated C18:1-CoA, lower affinity for unsaturated C20:4-CoA, and very weak affinity for saturated C16:0-CoA. Does not bind fatty acids. Plays a role in protein N-myristoylation. This Rattus norvegicus (Rat) protein is Acyl-CoA-binding domain-containing protein 6 (Acbd6).